Consider the following 336-residue polypeptide: ATP-dependent 6-phosphofructokinase (336 aa).

Residue Gly-11 participates in ATP binding. 21 to 25 (RAVVR) lines the ADP pocket. ATP contacts are provided by residues 72–73 (RY) and 102–105 (GDGS). A Mg(2+)-binding site is contributed by Asp-103. Substrate is bound at residue 125 to 127 (TID). Asp-127 functions as the Proton acceptor in the catalytic mechanism. Arg-154 contacts ADP. Substrate contacts are provided by residues Arg-162 and 169-171 (MGR). Residues 185-187 (GAD), Lys-211, and 213-215 (KKH) contribute to the ADP site. Residues Glu-222, Arg-244, and 250-253 (HIQR) contribute to the substrate site.

The protein belongs to the phosphofructokinase type A (PFKA) family. ATP-dependent PFK group I subfamily. Prokaryotic clade 'B1' sub-subfamily. Homotetramer. Requires Mg(2+) as cofactor.

The protein resides in the cytoplasm. It carries out the reaction beta-D-fructose 6-phosphate + ATP = beta-D-fructose 1,6-bisphosphate + ADP + H(+). The protein operates within carbohydrate degradation; glycolysis; D-glyceraldehyde 3-phosphate and glycerone phosphate from D-glucose: step 3/4. With respect to regulation, allosterically activated by ADP and other diphosphonucleosides, and allosterically inhibited by phosphoenolpyruvate. Its function is as follows. Catalyzes the phosphorylation of D-fructose 6-phosphate to fructose 1,6-bisphosphate by ATP, the first committing step of glycolysis. This chain is ATP-dependent 6-phosphofructokinase, found in Streptococcus sanguinis (strain SK36).